Consider the following 335-residue polypeptide: Glycerol-3-phosphate dehydrogenase [NAD(P)+] (335 aa).

NADPH-binding residues include S10, F11, R31, and K105. 3 residues coordinate sn-glycerol 3-phosphate: K105, G136, and S138. A140 is an NADPH binding site. Residues K191, D244, S254, R255, and N256 each contribute to the sn-glycerol 3-phosphate site. Catalysis depends on K191, which acts as the Proton acceptor. R255 is an NADPH binding site. NADPH is bound by residues V279 and E281.

It belongs to the NAD-dependent glycerol-3-phosphate dehydrogenase family.

The protein localises to the cytoplasm. It carries out the reaction sn-glycerol 3-phosphate + NAD(+) = dihydroxyacetone phosphate + NADH + H(+). It catalyses the reaction sn-glycerol 3-phosphate + NADP(+) = dihydroxyacetone phosphate + NADPH + H(+). Its pathway is membrane lipid metabolism; glycerophospholipid metabolism. Its function is as follows. Catalyzes the reduction of the glycolytic intermediate dihydroxyacetone phosphate (DHAP) to sn-glycerol 3-phosphate (G3P), the key precursor for phospholipid synthesis. The protein is Glycerol-3-phosphate dehydrogenase [NAD(P)+] of Myxococcus xanthus (strain DK1622).